The primary structure comprises 305 residues: Ornithine carbamoyltransferase (305 aa).

Residues 52 to 55, Gln-79, Arg-103, and 130 to 133 contribute to the carbamoyl phosphate site; these read STRT and HPCQ. Residues Asn-161, Asp-221, and 225–226 each bind L-ornithine; that span reads SM. Carbamoyl phosphate contacts are provided by residues 261–262 and Arg-289; that span reads CL.

Belongs to the aspartate/ornithine carbamoyltransferase superfamily. OTCase family.

The protein resides in the cytoplasm. It carries out the reaction carbamoyl phosphate + L-ornithine = L-citrulline + phosphate + H(+). Its pathway is amino-acid biosynthesis; L-arginine biosynthesis; L-arginine from L-ornithine and carbamoyl phosphate: step 1/3. Functionally, reversibly catalyzes the transfer of the carbamoyl group from carbamoyl phosphate (CP) to the N(epsilon) atom of ornithine (ORN) to produce L-citrulline. The chain is Ornithine carbamoyltransferase from Methanocorpusculum labreanum (strain ATCC 43576 / DSM 4855 / Z).